The chain runs to 106 residues: ATP-dependent Clp protease adapter protein ClpS (106 aa).

Basic and acidic residues predominate over residues 1–14 (MTDKAGDWQEHGPQ). Positions 1–21 (MTDKAGDWQEHGPQVEEAPPQ) are disordered.

It belongs to the ClpS family. In terms of assembly, binds to the N-terminal domain of the chaperone ClpA.

Involved in the modulation of the specificity of the ClpAP-mediated ATP-dependent protein degradation. The chain is ATP-dependent Clp protease adapter protein ClpS from Alkalilimnicola ehrlichii (strain ATCC BAA-1101 / DSM 17681 / MLHE-1).